The following is a 494-amino-acid chain: Cytochrome P450 2A13 (494 aa).

Asn297 provides a ligand contact to substrate. Cys439 is a binding site for heme.

The protein belongs to the cytochrome P450 family. It depends on heme as a cofactor. Expressed in liver and a number of extrahepatic tissues, including nasal mucosa, lung, trachea, brain, mammary gland, prostate, testis, and uterus, but not in heart, kidney, bone marrow, colon, small intestine, spleen, stomach, thymus, or skeletal muscle.

The protein localises to the endoplasmic reticulum membrane. It is found in the microsome membrane. The enzyme catalyses an organic molecule + reduced [NADPH--hemoprotein reductase] + O2 = an alcohol + oxidized [NADPH--hemoprotein reductase] + H2O + H(+). Exhibits a coumarin 7-hydroxylase activity. Active in the metabolic activation of hexamethylphosphoramide, N,N-dimethylaniline, 2'-methoxyacetophenone, N-nitrosomethylphenylamine, and the tobacco-specific carcinogen, 4-(methylnitrosamino)-1-(3-pyridyl)-1-butanone. Possesses phenacetin O-deethylation activity. The polypeptide is Cytochrome P450 2A13 (CYP2A13) (Homo sapiens (Human)).